We begin with the raw amino-acid sequence, 501 residues long: Postreplication repair E3 ubiquitin-protein ligase rad18 (501 aa).

The segment at C34–R72 adopts an RING-type zinc-finger fold. The segment at Q111–R154 is disordered. Basic and acidic residues predominate over residues K127–K142. Residues R143–R152 are compositionally biased toward basic residues. The segment at L186–Q214 adopts a UBZ4-type zinc-finger fold. Residues C189, C192, H204, and C209 each contribute to the Zn(2+) site. The disordered stretch occupies residues R203–R250. The span at Q225 to K246 shows a compositional bias: polar residues. Positions Y256–I290 constitute an SAP domain. The tract at residues I377–C501 is disordered.

The protein belongs to the RAD18 family. Interacts with E2 mus-8/ubc2, forming a complex with ubiquitin ligase activity.

The protein resides in the nucleus. It catalyses the reaction S-ubiquitinyl-[E2 ubiquitin-conjugating enzyme]-L-cysteine + [acceptor protein]-L-lysine = [E2 ubiquitin-conjugating enzyme]-L-cysteine + N(6)-ubiquitinyl-[acceptor protein]-L-lysine.. It functions in the pathway protein modification; protein ubiquitination. E3 RING-finger protein, member of the UBC2/RAD6 epistasis group. Associates to the E2 ubiquitin conjugating enzyme mus-8/ubc2 to form the mus-8/ubc2-uvs-2/rad18 ubiquitin ligase complex involved in postreplicative repair (PRR) of damaged DNA. This is Postreplication repair E3 ubiquitin-protein ligase rad18 (uvs-2) from Neurospora crassa (strain ATCC 24698 / 74-OR23-1A / CBS 708.71 / DSM 1257 / FGSC 987).